Reading from the N-terminus, the 542-residue chain is MDFFTEYGEGNRYKIEEVIGKGSYGVVCSALDTHTGDKVAIKKINDIFEHVSDATRILREIKLLRLLRHPDIVEIKHILLPPSRREFKDIYVVFELMESDLHQVIKANDDLTPEHYQFFLYQLLRGLKYIHTANVFHRDLKPKNILANADCKLKICDFGLARVAFSDTPTAIFWTDYIATRWYRAPELCGSFFSKYTPAIDIWSIGCIFAELLTGKPLFPGKNVVHQLDIITDLLGTPSPETISRIRNEKARRYLNSMRRKKPIPFTQKFPNADPLAMRLLERMLAFDPKDRPSAEEALADPYFKNIANVDREPSAQPITKLEFEFERRRITKEDIRELIYREILEYHPKMLREFLEGTESTGFMYPSAVDHFKKQFAYLEEHYAKGSTAAPPERQHNSLPRPCVVYSDNRPQSTASVTEDLSRCLIRDNNLKSQDSASVGASRIPQGAAARPGKAVGSVLRYGNCSTSAAEQQYEQRRVVRNPAIAPNSSVPLGSSYPRRNQTCKSETGDVERIDSSQTGPPKPYVANKLPATVDGRSGHW.

One can recognise a Protein kinase domain in the interval 13-304; that stretch reads YKIEEVIGKG…AEEALADPYF (292 aa). ATP-binding positions include 19-27 and K42; that span reads IGKGSYGVV. D139 functions as the Proton acceptor in the catalytic mechanism. T175 carries the phosphothreonine modification. The TXY motif lies at 175-177; it reads TDY. Residue Y177 is modified to Phosphotyrosine. Disordered stretches follow at residues 388 to 412 and 482 to 542; these read STAA…DNRP and RNPA…SGHW. The segment covering 488 to 507 has biased composition (polar residues); the sequence is PNSSVPLGSSYPRRNQTCKS.

It belongs to the protein kinase superfamily. CMGC Ser/Thr protein kinase family. MAP kinase subfamily. In terms of processing, dually phosphorylated on Thr-175 and Tyr-177, which activates the enzyme.

It carries out the reaction L-seryl-[protein] + ATP = O-phospho-L-seryl-[protein] + ADP + H(+). It catalyses the reaction L-threonyl-[protein] + ATP = O-phospho-L-threonyl-[protein] + ADP + H(+). Activated by threonine and tyrosine phosphorylation. In Oryza sativa subsp. japonica (Rice), this protein is Mitogen-activated protein kinase 14 (MPK14).